Consider the following 96-residue polypeptide: Large ribosomal subunit protein bL27 (96 aa).

Positions 1 to 9 are excised as a propeptide; sequence MLRLDLQFF. A disordered region spans residues 14–36; it reads GVGSTKNGRDSQSKRLGAKRADG.

The protein belongs to the bacterial ribosomal protein bL27 family. Post-translationally, the N-terminus is cleaved by ribosomal processing cysteine protease Prp.

This Bacillus anthracis (strain A0248) protein is Large ribosomal subunit protein bL27.